The sequence spans 221 residues: UPF0502 protein VSAL_II0605 (221 aa).

This sequence belongs to the UPF0502 family.

The protein is UPF0502 protein VSAL_II0605 of Aliivibrio salmonicida (strain LFI1238) (Vibrio salmonicida (strain LFI1238)).